A 398-amino-acid polypeptide reads, in one-letter code: ATP-dependent RNA helicase eIF4A (398 aa).

Residues 25–53 (DSFDSMDLKPELLRGIYAYGFERPSAIQQ) carry the Q motif motif. The region spanning 56–226 (IMPIIKGSDV…TKFMRDPVRI (171 aa)) is the Helicase ATP-binding domain. ATP is bound at residue 69–76 (AQSGTGKT). The DEAD box motif lies at 174 to 177 (DEAD). Residues 237 to 398 (GIKQFYIAVE…EMPMNVADLI (162 aa)) form the Helicase C-terminal domain.

This sequence belongs to the DEAD box helicase family. eIF4A subfamily. In terms of assembly, component of the eIF4F complex, which composition varies with external and internal environmental conditions. It is composed of at least eIF4A, eIF4E and eIF4G.

The protein resides in the cytoplasm. It catalyses the reaction ATP + H2O = ADP + phosphate + H(+). Its function is as follows. ATP-dependent RNA helicase which is a subunit of the eIF4F complex involved in cap recognition and is required for mRNA binding to ribosome. In the current model of translation initiation, eIF4A unwinds RNA secondary structures in the 5'-UTR of mRNAs which is necessary to allow efficient binding of the small ribosomal subunit, and subsequent scanning for the initiator codon. The chain is ATP-dependent RNA helicase eIF4A (tif1) from Aspergillus clavatus (strain ATCC 1007 / CBS 513.65 / DSM 816 / NCTC 3887 / NRRL 1 / QM 1276 / 107).